The chain runs to 75 residues: Mating pheromone Er-1/Er-3 (75 aa).

The first 19 residues, 1–19 (MNKLAILAIIAMVLFSANA), serve as a signal peptide directing secretion. Positions 20 to 35 (FRFQSRLRSNVEAKTG) are excised as a propeptide. 3 disulfide bridges follow: C38-C54, C45-C71, and C50-C63.

As to quaternary structure, homodimer.

The protein localises to the secreted. Its subcellular location is the cell membrane. In terms of biological role, mating ciliate pheromones (or gamones) are diffusible extracellular communication signals that distinguish different intraspecific classes of cells commonly referred to as 'mating types'. They prepare the latter for conjugation by changing their cell surface properties. The membrane-bound form promotes inter-cellular communication and adhesion for mating pair formation and may act as binding site for the secreted form. In Euplotes raikovi, this protein is Mating pheromone Er-1/Er-3 (MAT1).